Here is a 189-residue protein sequence, read N- to C-terminus: Probable chorismate pyruvate-lyase (189 aa).

R74, L113, and E175 together coordinate substrate.

The protein belongs to the UbiC family.

Its subcellular location is the cytoplasm. It carries out the reaction chorismate = 4-hydroxybenzoate + pyruvate. It participates in cofactor biosynthesis; ubiquinone biosynthesis. Removes the pyruvyl group from chorismate, with concomitant aromatization of the ring, to provide 4-hydroxybenzoate (4HB) for the ubiquinone pathway. This is Probable chorismate pyruvate-lyase from Azoarcus sp. (strain BH72).